Consider the following 327-residue polypeptide: Selenate reductase subunit beta (327 aa).

3 4Fe-4S ferredoxin-type domains span residues 6–35 (LAYVFDLNKCIGCHTCTMACKQLWTNRDGR), 124–155 (NHYFYLPRICNHCSNPACLAACPTKAIYKREE), and 157–186 (GLVVVDQSRCKGYRYCVKACPYGKMYFNLQ). [4Fe-4S] cluster is bound by residues Cys-15, Cys-18, Cys-21, Cys-25, Cys-133, Cys-136, and Cys-141. [3Fe-4S] cluster is bound by residues Cys-145, Cys-166, and Cys-172. 5 residues coordinate [4Fe-4S] cluster: Cys-176, Cys-193, Cys-196, Cys-208, and Cys-212.

Heterotrimer of alpha (SerA), beta (SerB) and gamma (SerC) subunits. It depends on [3Fe-4S] cluster as a cofactor. The cofactor is [4Fe-4S] cluster.

Its subcellular location is the periplasm. The catalysed reaction is selenite + 2 Fe(III)-[cytochrome c] + H2O = 2 Fe(II)-[cytochrome] + selenate + 2 H(+). Its activity is regulated as follows. Enzyme isolated from cells grown in a tungstate rich environment shows a 20-fold reduction in selenate reductase activity. Functionally, component of the selenate reductase, which catalyzes the reduction of selenate to selenite and allows anaerobic growth with selenate as the sole terminal electron acceptor. A c-type di-heme cytochrome of the cytc4 family was shown to donate electrons to the selenate reductase in vitro. SerABC can also use reduced benzyl viologen or reduced methyl viologen as an electron donor. This subunit transfers electrons from SerC to SerA. The reductase is specific for selenate, and cannot reduce nitrate, nitrite, chlorate or sulfate. The sequence is that of Selenate reductase subunit beta from Thauera selenatis.